We begin with the raw amino-acid sequence, 315 residues long: HTH-type transcriptional regulator TreR (315 aa).

The HTH lacI-type domain occupies 5–59; it reads LTIKDIARLSGVGKSTVSRVLNNESGVSQLTRERVEAVMNQHGFSPSRSARAMRG. The segment at residues 7 to 26 is a DNA-binding region (H-T-H motif); that stretch reads IKDIARLSGVGKSTVSRVLN. Alpha,alpha-trehalose 6-phosphate contacts are provided by residues 71-77, G126, R147, 187-190, R194, T242, and Y284; these read RLDSLSE and DVTT.

In terms of assembly, homodimer.

Its function is as follows. Repressor of the treBC operon. It is able to bind trehalose-6-phosphate and trehalose. The protein is HTH-type transcriptional regulator TreR (treR) of Escherichia coli (strain K12).